A 379-amino-acid chain; its full sequence is NADH-quinone oxidoreductase subunit D 2 (379 aa).

It belongs to the complex I 49 kDa subunit family. As to quaternary structure, NDH-1 is composed of 14 different subunits. Subunits NuoB, C, D, E, F, and G constitute the peripheral sector of the complex.

Its subcellular location is the cell inner membrane. It catalyses the reaction a quinone + NADH + 5 H(+)(in) = a quinol + NAD(+) + 4 H(+)(out). In terms of biological role, NDH-1 shuttles electrons from NADH, via FMN and iron-sulfur (Fe-S) centers, to quinones in the respiratory chain. The immediate electron acceptor for the enzyme in this species is believed to be ubiquinone. Couples the redox reaction to proton translocation (for every two electrons transferred, four hydrogen ions are translocated across the cytoplasmic membrane), and thus conserves the redox energy in a proton gradient. The chain is NADH-quinone oxidoreductase subunit D 2 from Anaeromyxobacter dehalogenans (strain 2CP-C).